We begin with the raw amino-acid sequence, 246 residues long: Probable septum site-determining protein MinC (246 aa).

Belongs to the MinC family. As to quaternary structure, interacts with MinD and FtsZ.

Cell division inhibitor that blocks the formation of polar Z ring septums. Rapidly oscillates between the poles of the cell to destabilize FtsZ filaments that have formed before they mature into polar Z rings. Prevents FtsZ polymerization. The chain is Probable septum site-determining protein MinC from Pseudomonas savastanoi pv. phaseolicola (strain 1448A / Race 6) (Pseudomonas syringae pv. phaseolicola (strain 1448A / Race 6)).